A 720-amino-acid chain; its full sequence is Transcriptional regulator EFH1 (720 aa).

2 stretches are compositionally biased toward polar residues: residues methionine 1–asparagine 15 and proline 22–aspartate 35. Disordered stretches follow at residues methionine 1–threonine 111, serine 181–glutamine 223, glutamine 245–threonine 336, and tyrosine 365–aspartate 437. Residues glutamine 71–asparagine 105 show a composition bias toward low complexity. Polar residues predominate over residues serine 181–lysine 200. A compositionally biased stretch (low complexity) spans glutamine 201 to glutamine 223. The segment covering glycine 254–leucine 266 has biased composition (polar residues). Positions glutamine 267–proline 304 are enriched in low complexity. The segment covering tyrosine 313–threonine 336 has biased composition (polar residues). A compositionally biased stretch (low complexity) spans glutamine 366–serine 399. The span at lysine 400–alanine 413 shows a compositional bias: polar residues. Over residues serine 414–isoleucine 433 the composition is skewed to low complexity. Residues lysine 446–lysine 552 form the HTH APSES-type domain. The H-T-H motif DNA-binding region spans glycine 480–glutamate 501. Residues glycine 569–arginine 582 show a composition bias toward basic and acidic residues. The interval glycine 569–threonine 662 is disordered. Acidic residues predominate over residues valine 613–glycine 644. The segment covering serine 645–asparagine 654 has biased composition (low complexity).

It belongs to the EFG1/PHD1/stuA family.

It localises to the nucleus. Transcription factor that regulates filamentous growth through repression of EFG1. Regulates the level of colonizing fungi, favoring commensalism as opposed to candidiasis. This Candida albicans (strain SC5314 / ATCC MYA-2876) (Yeast) protein is Transcriptional regulator EFH1 (EFH1).